We begin with the raw amino-acid sequence, 495 residues long: Iroquois-class homeodomain protein irx-4-B (495 aa).

The segment at residues 141–203 (GSTRRKNATR…NARRRLKKEN (63 aa)) is a DNA-binding region (homeobox; TALE-type). The interval 203–245 (NKMTWPPRNKCSDEKRPYDEEEEEEEDSQKATIKNEKKTVDEE) is disordered. The span at 235–245 (IKNEKKTVDEE) shows a compositional bias: basic and acidic residues.

The protein belongs to the TALE/IRO homeobox family.

It is found in the nucleus. Acts partially redundantly with other irx members in neural patterning. Required for formation of the posterior forebrain, midbrain, hindbrain, and to a lesser extent, spinal cord. Patterns the neuroectoderm in both the anterior/posterior and dorsal/ventral axes. Does not appear to play a role in pronephros kidney development. This chain is Iroquois-class homeodomain protein irx-4-B (irx4-b), found in Xenopus laevis (African clawed frog).